Consider the following 576-residue polypeptide: Polyphenol oxidase 3 (576 aa).

6 residues coordinate Cu cation: His61, His85, His94, His259, His263, and His296. A cross-link (2'-(S-cysteinyl)-histidine (Cys-His)) is located at residues 83–85 (CTH). Residue His263 coordinates substrate. Positions 393–576 (FVTTQTENPA…ILDDIIHRVN (184 aa)) are cleaved as a propeptide — removed in mature form.

It belongs to the tyrosinase family. Tetramer composed of two subunits of PPO3 (H subunits) and two subunits of the as yet uncharacterized product of ORF239342 (L subunits). The cofactor is Cu(2+). The C-ter is probably cleaved after Gly-392 since the mature active protein is smaller than the protein encoded by the gene.

It catalyses the reaction 2 L-dopa + O2 = 2 L-dopaquinone + 2 H2O. The enzyme catalyses L-tyrosine + O2 = L-dopaquinone + H2O. Functionally, copper-containing oxidase that catalyzes both the o-hydroxylation of monophenols and the subsequent oxidation of the resulting o-diphenols into reactive o-quinones, which evolve spontaneously to produce intermediates, which associate in dark brown pigments. Involved in the initial step of melanin synthesis. Melanins constitute a mechanism of defense and resistance to stress such as UV radiations, free radicals, gamma rays, dehydratation and extreme temperatures, and contribute to the fungal cell-wall resistance against hydrolytic enzymes in avoiding cellular lysis. Fungal pigments are also involved in the formation and stability of spores. The chain is Polyphenol oxidase 3 (PPO3) from Agaricus bisporus (White button mushroom).